The sequence spans 304 residues: Aspartate carbamoyltransferase catalytic subunit (304 aa).

Residues arginine 49 and threonine 50 each coordinate carbamoyl phosphate. An L-aspartate-binding site is contributed by lysine 77. Arginine 99, histidine 127, and glutamine 130 together coordinate carbamoyl phosphate. The L-aspartate site is built by arginine 160 and arginine 211. Carbamoyl phosphate contacts are provided by alanine 250 and proline 251. Serine 303 carries the phosphoserine modification.

Belongs to the aspartate/ornithine carbamoyltransferase superfamily. ATCase family. As to quaternary structure, heterododecamer (2C3:3R2) of six catalytic PyrB chains organized as two trimers (C3), and six regulatory PyrI chains organized as three dimers (R2).

It carries out the reaction carbamoyl phosphate + L-aspartate = N-carbamoyl-L-aspartate + phosphate + H(+). It participates in pyrimidine metabolism; UMP biosynthesis via de novo pathway; (S)-dihydroorotate from bicarbonate: step 2/3. Functionally, catalyzes the condensation of carbamoyl phosphate and aspartate to form carbamoyl aspartate and inorganic phosphate, the committed step in the de novo pyrimidine nucleotide biosynthesis pathway. The chain is Aspartate carbamoyltransferase catalytic subunit from Bacillus subtilis (strain 168).